Reading from the N-terminus, the 200-residue chain is Large ribosomal subunit protein uL22c (200 aa).

Belongs to the universal ribosomal protein uL22 family. In terms of assembly, part of the 50S ribosomal subunit.

The protein localises to the plastid. It localises to the chloroplast. This protein binds specifically to 23S rRNA. Functionally, the globular domain of the protein is located near the polypeptide exit tunnel on the outside of the subunit, while an extended beta-hairpin is found that lines the wall of the exit tunnel in the center of the 70S ribosome. This Medicago sativa (Alfalfa) protein is Large ribosomal subunit protein uL22c (rpl22).